A 532-amino-acid polypeptide reads, in one-letter code: Intercellular adhesion molecule 1 (532 aa).

A signal peptide spans 1 to 27 (MAPSSPRPALPALLVLLGALFPGPGNA). The Extracellular portion of the chain corresponds to 28–480 (QTSVSPPKVI…TVNVLSPRYE (453 aa)). Ig-like C2-type domains lie at 41–103 (GGSV…QSTA) and 128–193 (GKDL…LDLR). Cystine bridges form between Cys-48/Cys-92, Cys-52/Cys-96, and Cys-135/Cys-186. The Cell attachment site; atypical motif lies at 152–154 (RGE). N-linked (GlcNAc...) asparagine glycosylation is found at Asn-202 and Asn-267. Ig-like C2-type domains lie at 230–297 (DTQG…LGTQ) and 325–378 (GTEV…LEVA). Disulfide bonds link Cys-237-Cys-290 and Cys-332-Cys-371. N-linked (GlcNAc...) asparagine glycosylation is found at Asn-385 and Asn-406. 3 cysteine pairs are disulfide-bonded: Cys-403–Cys-419, Cys-419–Cys-457, and Cys-431–Cys-457. One can recognise an Ig-like C2-type 5 domain in the interval 412–464 (NSQQTPMCQAWGNPLPELKCLKDGTFPLPVGESVTVTRDLEGTYLCRARSTQG). Residues 481–503 (FVIIAVVAAAVIMGTAGLSTYLY) form a helical membrane-spanning segment. Topologically, residues 504-532 (NRQRKIRKYRLQQAQKGTPMKPNTQATPP) are cytoplasmic. Thr-521 and Thr-530 each carry phosphothreonine.

Belongs to the immunoglobulin superfamily. ICAM family. Homodimer. Interacts with MUC1 and promotes cell aggregation in epithelial cells. Interacts with ARHGEF26/SGEF. Interacts (on T cell side) with CD81, CD247 and CD9 at immunological synapses between antigen-presenting cells and T cells. In terms of processing, monoubiquitinated, which is promoted by MARCH9 and leads to endocytosis.

Its subcellular location is the membrane. In terms of biological role, ICAM proteins are ligands for the leukocyte adhesion protein LFA-1 (integrin alpha-L/beta-2). During leukocyte trans-endothelial migration, ICAM1 engagement promotes the assembly of endothelial apical cups through ARHGEF26/SGEF and RHOG activation. This Gorilla gorilla gorilla (Western lowland gorilla) protein is Intercellular adhesion molecule 1 (ICAM1).